Reading from the N-terminus, the 356-residue chain is Phospho-N-acetylmuramoyl-pentapeptide-transferase (356 aa).

Transmembrane regions (helical) follow at residues 25 to 45 (TVAA…SIIA), 70 to 90 (GTPT…AFLW), 93 to 113 (LSNI…MIGF), 138 to 158 (FLIA…GLAL), 164 to 184 (YFIN…VGTG), 195 to 215 (GLAI…AYLS), 235 to 255 (LAVL…FNAP), 258 to 278 (AIFM…IVAV), 284 to 304 (IVLA…VIQV), and 333 to 353 (QVVI…LSTL).

It belongs to the glycosyltransferase 4 family. MraY subfamily. The cofactor is Mg(2+).

Its subcellular location is the cell inner membrane. It carries out the reaction UDP-N-acetyl-alpha-D-muramoyl-L-alanyl-gamma-D-glutamyl-meso-2,6-diaminopimeloyl-D-alanyl-D-alanine + di-trans,octa-cis-undecaprenyl phosphate = di-trans,octa-cis-undecaprenyl diphospho-N-acetyl-alpha-D-muramoyl-L-alanyl-D-glutamyl-meso-2,6-diaminopimeloyl-D-alanyl-D-alanine + UMP. Its pathway is cell wall biogenesis; peptidoglycan biosynthesis. Its function is as follows. Catalyzes the initial step of the lipid cycle reactions in the biosynthesis of the cell wall peptidoglycan: transfers peptidoglycan precursor phospho-MurNAc-pentapeptide from UDP-MurNAc-pentapeptide onto the lipid carrier undecaprenyl phosphate, yielding undecaprenyl-pyrophosphoryl-MurNAc-pentapeptide, known as lipid I. The chain is Phospho-N-acetylmuramoyl-pentapeptide-transferase from Bartonella quintana (strain Toulouse) (Rochalimaea quintana).